We begin with the raw amino-acid sequence, 353 residues long: Protein MGF 360-13L (353 aa).

Belongs to the asfivirus MGF 360 family.

Its function is as follows. Plays a role in virus cell tropism, and may be required for efficient virus replication in macrophages. This is Protein MGF 360-13L from African swine fever virus (isolate Warthog/Namibia/Wart80/1980) (ASFV).